The chain runs to 832 residues: Cation/H(+) antiporter 21 (832 aa).

Transmembrane regions (helical) follow at residues 33–55 (ISAA…RILY), 61–81 (LCLP…PTVL), 99–119 (LLET…GLGL), 132–152 (VIIA…LYYL), 161–181 (ILAG…PDLA), 200–220 (CAAV…MAIF), 236–256 (STIA…AWIF), 278–298 (IICS…AFLF), 319–339 (FLSG…ADIG), 352–372 (VVTS…SIFL), 379–399 (GLAI…ILNA), and 413–433 (HLTL…AIAY). The span at 792 to 802 (RQTAENNNQEP) shows a compositional bias: polar residues. The tract at residues 792 to 832 (RQTAENNNQEPVQGKAKTDHEATPFMEDEDDEVEHQYSMRR) is disordered.

The protein belongs to the monovalent cation:proton antiporter 2 (CPA2) transporter (TC 2.A.37) family. CHX (TC 2.A.37.4) subfamily. As to expression, specifically expressed in root endodermal cells. Expressed in seedlings, roots, leaves, flowers, flower buds and pollen.

The protein resides in the cell membrane. In terms of biological role, operates as a Na(+)/H(+) antiporter that plays a role in regulation of xylem Na(+) concentration and, consequently, Na(+) accumulation in the leaf. Required for pollen tube guidance, but not for normal pollen development. May also be involved in the development or function of the female gametophyte. In Arabidopsis thaliana (Mouse-ear cress), this protein is Cation/H(+) antiporter 21 (CHX21).